The following is a 463-amino-acid chain: Exodeoxyribonuclease 7 large subunit (463 aa).

Belongs to the XseA family. Heterooligomer composed of large and small subunits.

Its subcellular location is the cytoplasm. The catalysed reaction is Exonucleolytic cleavage in either 5'- to 3'- or 3'- to 5'-direction to yield nucleoside 5'-phosphates.. Functionally, bidirectionally degrades single-stranded DNA into large acid-insoluble oligonucleotides, which are then degraded further into small acid-soluble oligonucleotides. The chain is Exodeoxyribonuclease 7 large subunit from Bordetella bronchiseptica (strain ATCC BAA-588 / NCTC 13252 / RB50) (Alcaligenes bronchisepticus).